The following is a 249-amino-acid chain: 3-deoxy-manno-octulosonate cytidylyltransferase (249 aa).

The protein belongs to the KdsB family.

The protein localises to the cytoplasm. The enzyme catalyses 3-deoxy-alpha-D-manno-oct-2-ulosonate + CTP = CMP-3-deoxy-beta-D-manno-octulosonate + diphosphate. It functions in the pathway nucleotide-sugar biosynthesis; CMP-3-deoxy-D-manno-octulosonate biosynthesis; CMP-3-deoxy-D-manno-octulosonate from 3-deoxy-D-manno-octulosonate and CTP: step 1/1. The protein operates within bacterial outer membrane biogenesis; lipopolysaccharide biosynthesis. Activates KDO (a required 8-carbon sugar) for incorporation into bacterial lipopolysaccharide in Gram-negative bacteria. In Brucella anthropi (strain ATCC 49188 / DSM 6882 / CCUG 24695 / JCM 21032 / LMG 3331 / NBRC 15819 / NCTC 12168 / Alc 37) (Ochrobactrum anthropi), this protein is 3-deoxy-manno-octulosonate cytidylyltransferase.